We begin with the raw amino-acid sequence, 169 residues long: Small ribosomal subunit protein uS13m (169 aa).

The disordered stretch occupies residues 149–169 (KKLQEKKNKEQKKSQKCKTKK). Positions 150–161 (KLQEKKNKEQKK) are enriched in basic and acidic residues.

Belongs to the universal ribosomal protein uS13 family. In terms of assembly, part of the small ribosomal subunit.

It localises to the mitochondrion. In terms of biological role, located at the top of the head of the small subunit, it contacts several helices of the small subunit rRNA. The chain is Small ribosomal subunit protein uS13m (mrps13) from Dictyostelium discoideum (Social amoeba).